The following is a 921-amino-acid chain: MRSSFRLKPICFYLMGVTLYHYSYAEDAGRAGSEAQIQVLEDVHVKAKRVPKDKKVFTDARAVSTRQDIFKSSENLDNIVRSIPGAFTQQDKSSGIVSLNIRGDSGFGRVNTMVDGITQTFYSTSTDAGRAGGSSQFGASVDSNFIAGLDVVKGSFSGSAGINSLAGSANLRTLGVDDVVQGNNTYGLLLKGLTGTNSTKGNAMAAIGARKWLESGASVGVLYGHSRRSVAQNYRVGGGGQHIGNFGAEYLERRKQRYFVQEGALKFNSDSGKWERDLQRQQWKYKPYKNYNNQELQKYIEEHDKSWRENLAPQYDITPIDPSSLKQQSAGNLFKLEYDGVFNKYTAQFRDLNTKIGSRKIINRNYQFNYGLSLNPYTNLNLTAAYNSGRQKYPKGSKFTGWGLLKDFETYNNAKILDLNNTATFRLPRETELQTTLGFNYFHNEYGKNRFPEELGLFFDGPDQDNGLYSYLGRFKGDKGLLPQKSTIVQPAGSQYFNTFYFDAALKKDIYRLNYSTNTVGYRFGGEYTGYYGSDDEFKRAFGENSPTYKKHCNRSCGIYEPVLKKYGKKRANNHSVSISADFGDYFMPFASYSRTHRMPNIQEMYFSQIGDSGVHTALKPERANTWQFGFNTYKKGLLKQDDTLGLKLVGYRSRIDNYIHNVYGKWWDLNGDIPSWVSSTGLAYTIQHRNFKDKVHKHGFELELNYDYGRFFTNLSYAYQKSTQPTNFSDASESPNNASKEDQLKQGYGLSRVSALPRDYGRLEVGTRWLGNKLTLGGAMRYFGKSIRATAEERYIDGTNGGNTSNFRQLGKRSIKQTETLARQPLIFDFYAAYEPKKNLIFRAEVKNLFDRRYIDPLDAGNDAATQRYYSSFDPKDKDEDVTCNADKTLCNGKYGGTSKSVLTNFARGRTFLMTMSYKF.

Positions 1–25 (MRSSFRLKPICFYLMGVTLYHYSYA) are cleaved as a signal peptide. One can recognise a TBDR plug domain in the interval 53–174 (DKKVFTDARA…LAGSANLRTL (122 aa)). A TBDR beta-barrel domain is found at 185–921 (TYGLLLKGLT…TFLMTMSYKF (737 aa)). A TonB C-terminal box motif is present at residues 904–921 (LTNFARGRTFLMTMSYKF).

This sequence belongs to the TonB-dependent receptor family.

It localises to the cell outer membrane. Probable receptor, TonB-dependent. This is Probable TonB-dependent receptor NMB1497 from Neisseria meningitidis serogroup B (strain ATCC BAA-335 / MC58).